The following is a 663-amino-acid chain: ATP-dependent zinc metalloprotease FtsH (663 aa).

Residues 1 to 12 lie on the Stromal side of the membrane; it reads MNKKETNTSWWR. Residues 13–33 traverse the membrane as a helical segment; sequence IILISLGISIICILAAFLAMK. The Lumenal portion of the chain corresponds to 34–135; sequence DGFFVLENNT…HPPKLDIFKT (102 aa). Residues 136–156 traverse the membrane as a helical segment; the sequence is ISDTLGSLIVPGLVVAVFYLF. The Stromal segment spans residues 157–663; the sequence is LERANNNNNN…KIYESKFPKK (507 aa). Residues 165–184 are disordered; that stretch reads NNNSNGSPFGPGGGPNQNMR. 244–251 serves as a coordination point for ATP; that stretch reads GPPGTGKT. H465 is a binding site for Zn(2+). The active site involves E466. Residues H469 and D543 each coordinate Zn(2+).

In the central section; belongs to the AAA ATPase family. It in the C-terminal section; belongs to the peptidase M41 family. As to quaternary structure, homohexamer. The cofactor is Zn(2+).

Its subcellular location is the plastid. The protein localises to the chloroplast thylakoid membrane. Functionally, acts as a processive, ATP-dependent zinc metallopeptidase. The protein is ATP-dependent zinc metalloprotease FtsH of Heterosigma akashiwo (strain NIES-293 / 8280G21-1).